A 453-amino-acid chain; its full sequence is Pentatricopeptide repeat-containing protein At2g38420, mitochondrial (453 aa).

Residues 1–77 constitute a mitochondrion transit peptide; the sequence is MARSSSWHRM…CEPTPQAYRF (77 aa). 9 PPR repeats span residues 107–141, 142–177, 178–212, 213–249, 250–284, 285–319, 320–354, 355–389, and 390–424; these read PESIFRDVIAAYGFSGRIEEAIEVFFKIPNFRCVP, SAYTLNALLLVLVRKRQSLELVPEILVKACRMGVRL, EESTFGILIDALCRIGEVDCATELVRYMSQDSVIV, DPRLYSRLLSSVCKHKDSSCFDVIGYLEDLRKTRFSP, GLRDYTVVMRFLVEGGRGKEVVSVLNQMKCDRVEP, DLVCYTIVLQGVIADEDYPKADKLFDELLLLGLAP, DVYTYNVYINGLCKQNDIEGALKMMSSMNKLGSEP, NVVTYNILIKALVKAGDLSRAKTLWKEMETNGVNR, and NSHTFDIMISAYIEVDEVVCAHGLLEEAFNMNVFV.

It belongs to the PPR family. P subfamily.

The protein localises to the mitochondrion. The polypeptide is Pentatricopeptide repeat-containing protein At2g38420, mitochondrial (Arabidopsis thaliana (Mouse-ear cress)).